Reading from the N-terminus, the 190-residue chain is MSKIYIDERSDAEIVCEAIKNIGLEGVTAVQLTRQLNMEKREVNKALYDLQRSAMVYSSDDIPPRWFMTTEADKPDAMTMADVIIDDVSREKSMREDHKSFDDVIPAKKIIDWKNANPVTIINEYCQITKRDWSFRIESVGPSNSPTFYACVDIDGRVFDKADGKSKRDAKNNAAKLAVDKLLGYVIIRF.

Residues 5-70 enclose the Z-binding domain; that stretch reads YIDERSDAEI…DIPPRWFMTT (66 aa). The DRBM domain maps to 117-184; sequence NPVTIINEYC…AKLAVDKLLG (68 aa).

This sequence belongs to the orthopoxvirus OPG065 family. As to quaternary structure, interacts with host G1P2/ISG15. Interacts with host EIF2AK2/PKR. Interacts with host ZBP1.

RNA-binding protein that plays a role in the inhibition of multiple cellular antiviral responses activated by double-stranded RNA (dsRNA), such as inhibition of PKR activation, necroptosis, and IFN-mediated antiviral activities. Recognizes and binds Z-RNA structures via its Z-binding domain and dsRNA via its DRBM domain: RNA-binding activity is required to escape host ZBP1-dependent necroptosis. Mechanistically, the Z-binding domain binds Z-RNAs that are produced during vaccinia virus infection, thereby competing with Z-RNA detection by host ZBP1, suppressing ZBP1-dependent necroptosis. Acts as a key inhibitor of the interferon response by blocking the phosphorylation and subsequent activation of IRF3 and IRF7 kinases that are required for interferon-alpha gene expression. Inhibits NF-kappa-B activation and the ubiquitin-like protein ISG15, which is an early antiviral protein. The binding with host ISG15 subsequently blocks host ISGylation. The polypeptide is RNA-binding protein OPG065 (OPG065) (Homo sapiens (Human)).